Here is a 572-residue protein sequence, read N- to C-terminus: Nucleolin 1 (572 aa).

Disordered regions lie at residues 1–312 (MGKA…ESAT) and 488–572 (DEAK…FGDE). A compositionally biased stretch (low complexity) spans 7–21 (KSVAVAVAPAAVPAK). Over residues 27 to 38 (KREAEDEIEKAV) the composition is skewed to basic and acidic residues. 2 stretches are compositionally biased toward low complexity: residues 45–58 (AAAA…PAPK) and 72–81 (KAASSSSGSS). Composition is skewed to acidic residues over residues 82–91 (SEEDSSESEE), 109–122 (SSDE…DDED), 144–156 (SESD…DEDE), 177–191 (DSSE…SDED), 208–222 (STDG…EDED), 235–247 (SDEE…ESSD), and 261–276 (ESSE…EEDE). Residues 300–311 (PASNQSQGTESA) show a composition bias toward polar residues. RRM domains follow at residues 311–387 (ATLF…LAHE) and 411–492 (QSIF…EAKP). Basic and acidic residues-rich tracts occupy residues 488 to 520 (DEAK…DRFG) and 528 to 545 (GGRD…DGGR). A compositionally biased stretch (polar residues) spans 553–566 (QSRQSAGTASTGKK).

The protein resides in the nucleus. The protein localises to the nucleolus. Its function is as follows. Involved in pre-rRNA processing and ribosome assembly. The polypeptide is Nucleolin 1 (Oryza sativa subsp. japonica (Rice)).